Reading from the N-terminus, the 78-residue chain is UPF0248 protein Msed_0897 (78 aa).

This sequence belongs to the UPF0248 family.

In Metallosphaera sedula (strain ATCC 51363 / DSM 5348 / JCM 9185 / NBRC 15509 / TH2), this protein is UPF0248 protein Msed_0897.